Consider the following 167-residue polypeptide: Small ribosomal subunit protein uS3m (167 aa).

The transit peptide at 1–35 (MVALYCGGGLRPLMLSWSRDLPCIWRALHTSAVCF) directs the protein to the mitochondrion.

Belongs to the universal ribosomal protein uS3 family. As to quaternary structure, component of the mitochondrial ribosome small subunit (28S) which comprises a 12S rRNA and about 30 distinct proteins.

It is found in the mitochondrion. The polypeptide is Small ribosomal subunit protein uS3m (MRPS24) (Bos taurus (Bovine)).